A 123-amino-acid polypeptide reads, in one-letter code: Ribosome-binding factor A (123 aa).

The protein belongs to the RbfA family. In terms of assembly, monomer. Binds 30S ribosomal subunits, but not 50S ribosomal subunits or 70S ribosomes.

It is found in the cytoplasm. In terms of biological role, one of several proteins that assist in the late maturation steps of the functional core of the 30S ribosomal subunit. Associates with free 30S ribosomal subunits (but not with 30S subunits that are part of 70S ribosomes or polysomes). Required for efficient processing of 16S rRNA. May interact with the 5'-terminal helix region of 16S rRNA. This is Ribosome-binding factor A from Solibacter usitatus (strain Ellin6076).